Consider the following 247-residue polypeptide: uncharacterized protein (247 aa).

Belongs to the AIM2 family.

The protein localises to the cytoplasm. It is found in the nucleus. This is an uncharacterized protein from Schizosaccharomyces pombe (strain 972 / ATCC 24843) (Fission yeast).